Here is a 46-residue protein sequence, read N- to C-terminus: Mu-segestritoxin-Sf1b (46 aa).

4 cysteine pairs are disulfide-bonded: cysteine 3–cysteine 19, cysteine 10–cysteine 22, cysteine 18–cysteine 42, and cysteine 24–cysteine 40. A keys region for toxin activity region spans residues 31–33 (RPW).

Belongs to the neurotoxin 16 (SFI) family. Expressed by the venom gland.

It localises to the secreted. Insecticidal toxin. Causes flaccid paralysis followed by death when injected into Heliothis virescens larvae. Does not induce any toxic effects when injected intravenously into adult mice at a dose of 1.25 mg/kg body weight. The polypeptide is Mu-segestritoxin-Sf1b (Segestria florentina (Tube-web spider)).